A 1027-amino-acid chain; its full sequence is 2-oxoglutarate dehydrogenase, mitochondrial (1027 aa).

The thiamine diphosphate site is built by arginine 315, aspartate 413, asparagine 446, isoleucine 448, and glutamine 674. Positions 413, 446, and 448 each coordinate Mg(2+).

It belongs to the alpha-ketoglutarate dehydrogenase family. In terms of assembly, homodimer. Component of the 2-oxoglutarate dehydrogenase complex. The cofactor is thiamine diphosphate. Requires Mg(2+) as cofactor.

It is found in the mitochondrion matrix. The enzyme catalyses N(6)-[(R)-lipoyl]-L-lysyl-[protein] + 2-oxoglutarate + H(+) = N(6)-[(R)-S(8)-succinyldihydrolipoyl]-L-lysyl-[protein] + CO2. In terms of biological role, the 2-oxoglutarate dehydrogenase complex catalyzes the overall conversion of 2-oxoglutarate to succinyl-CoA and CO(2). It contains multiple copies of three enzymatic components: 2-oxoglutarate dehydrogenase (E1), dihydrolipoamide succinyltransferase (E2) and lipoamide dehydrogenase (E3). The sequence is that of 2-oxoglutarate dehydrogenase, mitochondrial (ogdh-1) from Caenorhabditis briggsae.